The sequence spans 479 residues: MTLRFYDTASATIKDFVPVHPGEARLYYCGATVQGAPHIGHVRSALVFDVLARWLRFRGLEVTTVRNVTDIDDKILVNSRASYEQDYSGDHAREPWWALAYRFEGVFGQAYAALGIDRPTYEPRATGHVPEMHALIQELIDAGHAYPATDGSGDVYFDVRSWPRYGELTRQRVEDMQDAPDADPRGKRDPRDFALWKGRKEDEPLSASWDSPWGRGRPGWHLECSAMAGKYLGAHFDIHGGGLDLRFPHHENELAQSTAAGREFANFWLHNGLVTYEGEKMSKSIGNTVSPQDMLREARPLAVRYYLGQAHYRSVLDYRPTSLQEATAAVERVEAVLVAARAAGLGLDRDTQDVPAEFVAVMDDDLNVPRALAVLHETVRAANSALATGDHDAARPLVAAVAGMSDVLGLLQLMDLEGAGAGGAEHRALDVLVQDLLAQRAAARTARDWASADRIRDQLAAAGVVVKDGAQGSAWSVES.

A Zn(2+)-binding site is contributed by Cys-29. The short motif at 31–41 is the 'HIGH' region element; that stretch reads ATVQGAPHIGH. The interval 171–197 is disordered; the sequence is QRVEDMQDAPDADPRGKRDPRDFALWK. The segment covering 182-197 has biased composition (basic and acidic residues); the sequence is ADPRGKRDPRDFALWK. Cys-224, His-249, and Glu-253 together coordinate Zn(2+). A 'KMSKS' region motif is present at residues 280–284; sequence KMSKS. Lys-283 serves as a coordination point for ATP.

It belongs to the class-I aminoacyl-tRNA synthetase family. In terms of assembly, monomer. The cofactor is Zn(2+).

It is found in the cytoplasm. The catalysed reaction is tRNA(Cys) + L-cysteine + ATP = L-cysteinyl-tRNA(Cys) + AMP + diphosphate. The polypeptide is Cysteine--tRNA ligase (Kocuria rhizophila (strain ATCC 9341 / DSM 348 / NBRC 103217 / DC2201)).